Here is a 221-residue protein sequence, read N- to C-terminus: MVTPEDLECLKRIALMGGLNTPVFLKTISLGSELGFSPQTASRRLRSLEQQGFISRTLGTDGQQVTITHGGEDALRQEYCDYYRLFGRQEKSLMLNGTVQSGLGEGAYYMSLQPYADQFQRILGFTPFPGTLNIRLLPGATLQRKRLSSAEWKVVQGFESEGRTFGDVRCLPCFIRDVPCGIIIPGRTHYPEELIEVVSPEGLRKRFSLKDGDEVTIEVTL.

Residues 1–92 are H-T-H motif-like; that stretch reads MVTPEDLECL…YRLFGRQEKS (92 aa). The segment at 93-221 is riboflavin kinase; sequence LMLNGTVQSG…GDEVTIEVTL (129 aa). Residue 102-107 coordinates CDP; it reads GLGEGA. Mg(2+)-binding residues include Thr131 and Asn133. Residues Thr188 and Glu196 each contribute to the FMN site. Position 201-204 (201-204) interacts with CDP; that stretch reads EGLR.

The protein belongs to the archaeal riboflavin kinase family. Mg(2+) serves as cofactor.

It catalyses the reaction riboflavin + CTP = CDP + FMN + H(+). It functions in the pathway cofactor biosynthesis; FMN biosynthesis; FMN from riboflavin (CTP route): step 1/1. Catalyzes the CTP-dependent phosphorylation of riboflavin (vitamin B2) to form flavin mononucleotide (FMN). This Methanospirillum hungatei JF-1 (strain ATCC 27890 / DSM 864 / NBRC 100397 / JF-1) protein is Riboflavin kinase (ribK).